The chain runs to 465 residues: Iron-sulfur cluster assembly SufBD family protein SH2035 (465 aa).

Belongs to the iron-sulfur cluster assembly SufBD family.

This Staphylococcus haemolyticus (strain JCSC1435) protein is Iron-sulfur cluster assembly SufBD family protein SH2035.